The chain runs to 178 residues: 2-C-methyl-D-erythritol 2,4-cyclodiphosphate synthase (178 aa).

Residues Asp-24, His-26, and His-61 each coordinate a divalent metal cation. 24-26 (DSH) is a 4-CDP-2-C-methyl-D-erythritol 2-phosphate binding site. Residue 150–153 (TSGE) participates in 4-CDP-2-C-methyl-D-erythritol 2-phosphate binding.

Belongs to the IspF family. Homotrimer. A divalent metal cation serves as cofactor.

It carries out the reaction 4-CDP-2-C-methyl-D-erythritol 2-phosphate = 2-C-methyl-D-erythritol 2,4-cyclic diphosphate + CMP. The protein operates within isoprenoid biosynthesis; isopentenyl diphosphate biosynthesis via DXP pathway; isopentenyl diphosphate from 1-deoxy-D-xylulose 5-phosphate: step 4/6. Involved in the biosynthesis of isopentenyl diphosphate (IPP) and dimethylallyl diphosphate (DMAPP), two major building blocks of isoprenoid compounds. Catalyzes the conversion of 4-diphosphocytidyl-2-C-methyl-D-erythritol 2-phosphate (CDP-ME2P) to 2-C-methyl-D-erythritol 2,4-cyclodiphosphate (ME-CPP) with a corresponding release of cytidine 5-monophosphate (CMP). The sequence is that of 2-C-methyl-D-erythritol 2,4-cyclodiphosphate synthase from Chlamydia muridarum (strain MoPn / Nigg).